Consider the following 113-residue polypeptide: Large ribosomal subunit protein uL22 (113 aa).

This sequence belongs to the universal ribosomal protein uL22 family. In terms of assembly, part of the 50S ribosomal subunit.

In terms of biological role, this protein binds specifically to 23S rRNA; its binding is stimulated by other ribosomal proteins, e.g. L4, L17, and L20. It is important during the early stages of 50S assembly. It makes multiple contacts with different domains of the 23S rRNA in the assembled 50S subunit and ribosome. The globular domain of the protein is located near the polypeptide exit tunnel on the outside of the subunit, while an extended beta-hairpin is found that lines the wall of the exit tunnel in the center of the 70S ribosome. This Xylella fastidiosa (strain M12) protein is Large ribosomal subunit protein uL22.